The primary structure comprises 137 residues: Large ribosomal subunit protein uL16 (137 aa).

The disordered stretch occupies residues 1 to 22 (MLQPKRTKFRKQQKGRNRGLAH).

Belongs to the universal ribosomal protein uL16 family. Part of the 50S ribosomal subunit.

In terms of biological role, binds 23S rRNA and is also seen to make contacts with the A and possibly P site tRNAs. The protein is Large ribosomal subunit protein uL16 of Saccharophagus degradans (strain 2-40 / ATCC 43961 / DSM 17024).